A 244-amino-acid chain; its full sequence is tRNA pseudouridine synthase A (244 aa).

Catalysis depends on aspartate 52, which acts as the Nucleophile. Tyrosine 110 is a substrate binding site.

It belongs to the tRNA pseudouridine synthase TruA family. As to quaternary structure, homodimer.

The enzyme catalyses uridine(38/39/40) in tRNA = pseudouridine(38/39/40) in tRNA. Its function is as follows. Formation of pseudouridine at positions 38, 39 and 40 in the anticodon stem and loop of transfer RNAs. The chain is tRNA pseudouridine synthase A from Acetivibrio thermocellus (strain ATCC 27405 / DSM 1237 / JCM 9322 / NBRC 103400 / NCIMB 10682 / NRRL B-4536 / VPI 7372) (Clostridium thermocellum).